Here is a 476-residue protein sequence, read N- to C-terminus: Cytosolic Fe-S cluster assembly factor narfl (476 aa).

Residues C24, C71, C74, C77, C190, C246, C395, and C399 each contribute to the [4Fe-4S] cluster site.

The protein belongs to the NARF family. Component of the CIA complex.

Its function is as follows. Component of the cytosolic iron-sulfur protein assembly (CIA) complex, a multiprotein complex that mediates the incorporation of iron-sulfur cluster into extramitochondrial Fe/S proteins. The protein is Cytosolic Fe-S cluster assembly factor narfl (narfl) of Xenopus tropicalis (Western clawed frog).